A 129-amino-acid polypeptide reads, in one-letter code: MGDLTLPINSGAALAIHVALSAGIVAAIIVVAAWLREKRSGARPDVPYEGGVLPAQPQQGPLNAPYFLIAALFVIFDMEAAILFAWAVAARDAGWLGLIEAAVFIGVLLLALVYLWLDGALDWVKGKRR.

3 helical membrane-spanning segments follow: residues 14–34 (LAIHVALSAGIVAAIIVVAAW), 67–87 (FLIAALFVIFDMEAAILFAWA), and 95–115 (WLGLIEAAVFIGVLLLALVYL).

The protein belongs to the complex I subunit 3 family. In terms of assembly, NDH-1 is composed of 14 different subunits. Subunits NuoA, H, J, K, L, M, N constitute the membrane sector of the complex.

Its subcellular location is the cell inner membrane. It carries out the reaction a quinone + NADH + 5 H(+)(in) = a quinol + NAD(+) + 4 H(+)(out). NDH-1 shuttles electrons from NADH, via FMN and iron-sulfur (Fe-S) centers, to quinones in the respiratory chain. The immediate electron acceptor for the enzyme in this species is believed to be ubiquinone. Couples the redox reaction to proton translocation (for every two electrons transferred, four hydrogen ions are translocated across the cytoplasmic membrane), and thus conserves the redox energy in a proton gradient. This chain is NADH-quinone oxidoreductase subunit A, found in Rhodopseudomonas palustris (strain ATCC BAA-98 / CGA009).